The chain runs to 206 residues: Glycerol-3-phosphate acyltransferase (206 aa).

The next 5 helical transmembrane spans lie at 14 to 34 (IALAAAVIGYLLGSIPFGLIL), 67 to 87 (ATLLLDALKASAAAWIVGYFL), 91 to 111 (AAIIAGFFAFIGHLFPVWIGF), 124 to 144 (LLGVAPIMVVLFAAVWLAVAV), and 148 to 168 (YSSLSALVAMLVIPVALLILG).

Belongs to the PlsY family. As to quaternary structure, probably interacts with PlsX.

The protein localises to the cell inner membrane. It carries out the reaction an acyl phosphate + sn-glycerol 3-phosphate = a 1-acyl-sn-glycero-3-phosphate + phosphate. It functions in the pathway lipid metabolism; phospholipid metabolism. Its function is as follows. Catalyzes the transfer of an acyl group from acyl-phosphate (acyl-PO(4)) to glycerol-3-phosphate (G3P) to form lysophosphatidic acid (LPA). This enzyme utilizes acyl-phosphate as fatty acyl donor, but not acyl-CoA or acyl-ACP. This is Glycerol-3-phosphate acyltransferase from Rhizobium etli (strain ATCC 51251 / DSM 11541 / JCM 21823 / NBRC 15573 / CFN 42).